Consider the following 277-residue polypeptide: MPELPEVEVCRRGLEPELAGQVIQGVVIRAPKLRHEIPPALATLLPGCRVVAVRRRGKYLLLDCERRGVQGTLIIHLGMSGNLRFVPFDLPPAKHDHFELVLAGQILRFADPRRFGVVLWQPGPPASAECHPLLATQGIEPLSEMFTAEWLYEAIARRSGPIKPTLMDSHLVVGIGNIYASESLFRAGISPLRAANRVSRARYEILVPAIRETLSDAIAAGGSSIRDYVHSDGGAGCFQIQAGVYDRANQPCLRCGGVVRQIRQAGRSTYYCTGCQH.

Pro2 acts as the Schiff-base intermediate with DNA in catalysis. Catalysis depends on Glu3, which acts as the Proton donor. The active-site Proton donor; for beta-elimination activity is Lys58. DNA-binding residues include His95, Arg113, and Arg158. The FPG-type zinc finger occupies 243 to 277 (GVYDRANQPCLRCGGVVRQIRQAGRSTYYCTGCQH). The Proton donor; for delta-elimination activity role is filled by Arg267.

The protein belongs to the FPG family. As to quaternary structure, monomer. It depends on Zn(2+) as a cofactor.

The catalysed reaction is Hydrolysis of DNA containing ring-opened 7-methylguanine residues, releasing 2,6-diamino-4-hydroxy-5-(N-methyl)formamidopyrimidine.. It catalyses the reaction 2'-deoxyribonucleotide-(2'-deoxyribose 5'-phosphate)-2'-deoxyribonucleotide-DNA = a 3'-end 2'-deoxyribonucleotide-(2,3-dehydro-2,3-deoxyribose 5'-phosphate)-DNA + a 5'-end 5'-phospho-2'-deoxyribonucleoside-DNA + H(+). In terms of biological role, involved in base excision repair of DNA damaged by oxidation or by mutagenic agents. Acts as a DNA glycosylase that recognizes and removes damaged bases. Has a preference for oxidized purines, such as 7,8-dihydro-8-oxoguanine (8-oxoG). Has AP (apurinic/apyrimidinic) lyase activity and introduces nicks in the DNA strand. Cleaves the DNA backbone by beta-delta elimination to generate a single-strand break at the site of the removed base with both 3'- and 5'-phosphates. This chain is Formamidopyrimidine-DNA glycosylase, found in Dechloromonas aromatica (strain RCB).